Here is a 211-residue protein sequence, read N- to C-terminus: tRNA (guanine-N(7)-)-methyltransferase (211 aa).

The S-adenosyl-L-methionine site is built by glutamate 43, glutamate 68, aspartate 95, and aspartate 117. The active site involves aspartate 117. Residues lysine 121, aspartate 153, and 190 to 193 (TEYE) contribute to the substrate site.

It belongs to the class I-like SAM-binding methyltransferase superfamily. TrmB family.

The catalysed reaction is guanosine(46) in tRNA + S-adenosyl-L-methionine = N(7)-methylguanosine(46) in tRNA + S-adenosyl-L-homocysteine. It participates in tRNA modification; N(7)-methylguanine-tRNA biosynthesis. Catalyzes the formation of N(7)-methylguanine at position 46 (m7G46) in tRNA. This Staphylococcus saprophyticus subsp. saprophyticus (strain ATCC 15305 / DSM 20229 / NCIMB 8711 / NCTC 7292 / S-41) protein is tRNA (guanine-N(7)-)-methyltransferase.